A 513-amino-acid chain; its full sequence is ATP synthase subunit alpha (513 aa).

Residue 169 to 176 (GDRQTGKT) participates in ATP binding.

Belongs to the ATPase alpha/beta chains family. As to quaternary structure, F-type ATPases have 2 components, CF(1) - the catalytic core - and CF(0) - the membrane proton channel. CF(1) has five subunits: alpha(3), beta(3), gamma(1), delta(1), epsilon(1). CF(0) has three main subunits: a(1), b(2) and c(9-12). The alpha and beta chains form an alternating ring which encloses part of the gamma chain. CF(1) is attached to CF(0) by a central stalk formed by the gamma and epsilon chains, while a peripheral stalk is formed by the delta and b chains.

It is found in the cell inner membrane. The catalysed reaction is ATP + H2O + 4 H(+)(in) = ADP + phosphate + 5 H(+)(out). Its function is as follows. Produces ATP from ADP in the presence of a proton gradient across the membrane. The alpha chain is a regulatory subunit. In Shewanella amazonensis (strain ATCC BAA-1098 / SB2B), this protein is ATP synthase subunit alpha.